We begin with the raw amino-acid sequence, 237 residues long: Orotidine 5'-phosphate decarboxylase (237 aa).

Substrate-binding positions include D10, K33, 60 to 69 (DLKLHDIPNT), T124, R186, Q195, G215, and R216. K62 (proton donor) is an active-site residue.

Belongs to the OMP decarboxylase family. Type 1 subfamily. As to quaternary structure, homodimer.

It catalyses the reaction orotidine 5'-phosphate + H(+) = UMP + CO2. Its pathway is pyrimidine metabolism; UMP biosynthesis via de novo pathway; UMP from orotate: step 2/2. In terms of biological role, catalyzes the decarboxylation of orotidine 5'-monophosphate (OMP) to uridine 5'-monophosphate (UMP). This chain is Orotidine 5'-phosphate decarboxylase, found in Lactiplantibacillus plantarum (strain ATCC BAA-793 / NCIMB 8826 / WCFS1) (Lactobacillus plantarum).